The primary structure comprises 2620 residues: MPFLNGNTTHHEAHSAEPDHGNTEPMVIIGLAMRAADEATDAEAFWDFLFYVKGAAFLEESPNGFDAAFFKMSKTEVQSLDPQQRILMENVYHALENAGLPMEDVISSNTSVFVSGFNYHHADRLNSDLELSFKHRPTGAENSMISGRVSWFYDFQGASLTIDTACSSSLVGLHLARQSLQAKESDMAIVSGVSVIGYLSHLMKMSYSGLLGSEGKSLAFDQRADGYGLGEGVGTVILKTLSAAIRDGDTIRAVVRGTGLNHDGHTPGMTYPSAAAQESLIRKTYVAAGLDPKDTIYAESHGTGTQAGDLMECTAIAAAFETEKRDRPFYIGAVKPNVGHLEGGAGITSVIKSVLLLESGIIPPNATLKKINPKIRPEWNLQFPTRCVPWPTTGIRRSSISSYGISGTNAHCILDDAYHYCNQRGISVRHRTAETVPSEKEIELIVAKAVRRYQTNSANGFNKFDEPRGSDSAGSNANGSHGVAGTVGANGNGVNGINPSPGHMPENTKALQASSLLLFSAFDEKSLEKVLAQIRNYISSLDSNSAGQALHDLAFTLSTRRSRLPWKTYALCSSLVELHDMLSKPHLKAIKSRSPLRVGFVFTGQGAQYAQMGQQLLLYPVFRQSLEEASLYFKSLGCDWSLLEELTRDSKDSRISKSAFAHPLSCAVQIALLDLLLSWNVVPHRVVGHSSGEIAAAYCAGKISREGAWRVAYYRGHVLLHGKTDRVGGMLAAGIEEEPLLDLLSQVHAALPGGTLSIACYNSPRNHTISGDDAMVDALKVLLDEQGIFTRKLKVEHAAHSAHMEQFTGEYEELVGDLPSNRLLHFDHTVHMFSTLTGRLIDDSCVPEKSSHWSNSMVGPVEFTKAVSSMCFDSILGDGSSVQGSQVDVILEVGPHPAMQSAVKDILGLGSGIPYLATLSRKDTGLGTLLDTIGSLAAHGAPVDLDKVNRSANPLLKPRMLADLPPYPFSHEEQGLYESRLIKNIRLRQFPRHDLFGAPVPDWNPNSPRWRHFLRVSENPWLKEHVIGDEFVFPGAGYMVMAVEGMKQITDPAEMVGIFLRDVKFKAMLVVPDDTQGVEVCLSFYPVPESRTSLSTAWKRFEVASYNQKTEEWIEHCTGEVSPDLKKSLNPIDGTRTQEAEKAQFSAFAQSRQDVCTAPVDFTPVYDHLRKIGVNHGPSFRNLAAVNIGDREQGLMTGDIVVPDITQVMPEKYAHGHLIHPTTLDNAFHASFASIYDLEGKTMMRRGCVPSYVQDVWLSATALSSDPGTILRCTSEASHALHGAFESTVHAWDPANPSERLISLAGIRLSPFKPESSESIAAENRTCYSVEWYPDLNLLTKREFQKLLSRFPAPLETFDAQQKWFSQLQLASTLLATDGLRESREMKDVNLEDHQRGYRELLRAIAAGVTTQSIPYVSLDMWLEYSRNSDLKEQLYREIEDQSPDGALLVRMGAAIPSILGREITAQYLLYEQDDLLSVWDENRLSRGKILPALTQYLTLLRKSQRGLRVLELGSRTGVLAEHVLKTLCVDGTENSIEQYTIRSQSADHCEKLKKRLSAWVDIIRYEALDLTAKSSEQEIQINPFDLVIVNNFVRGQPNMEEMMLRLNSLMRQGGRLLILEDVRSESLHANIIFGALPGWREATKASWDAESGTDKLEWDRVLRNTGFSGVDFEASSSIYPDFADFSLVASTASHGMLEATPPSFEVLVIIQSHSEISRSLARGLLTAGVSHSICLIDDIRADNVIGRVCISLLEAEQPILNSMDETTFQAIQNLVTACDSLLWVTGDPLAHPEFQMATGLIRTIRWELDRNDLNLITIALDGESTASTDMNVDALIRVLRYQFLDQCSKDSGNTNSEYRIRDSVIETNHAVKNTVASAVIEAQFSSPKPTLSTWESIERPVRLINTSPGIDSLTWVTDEDISRKPLAVNEIEIDVHAVGLNFKDLLVAMGEIDQPGFGHEAAGIVVRVGSSVSTFKAGDRVMYLGDPSPGKMGTLRTRSRVHCGLAIKIPDTMGFEIAAGLPIIYGTVIYSLGHIARLRAGEKVLIHAAAGGIGQAAIQYAHAKGAEIFVTLSSLEKKQYIMENFHIRPDHIFSSRDLNFAAGIKRIAPAGVDVVLNSLSGEALRQSWQCVAPFGRFVEIGKLDLQAGSKLDMTPFLYNVSFSGVDLNALAENRPEVCQELLQETIDLWSNQDIHEARPTQVLDYGQLKEGLRLLQTGKSIGKVTLVPGTHPVSVIPPPFLPLELDANASFILAGGLGGIGRSIALRLARRGAKHIVFLSRSATVHEAGQETIAKLKLLGCTSHVFQCDISNETRLLEVITRVRETLPPIKGCIQCSFVLKDKAFDSMTHEEWQTALTPKVSGSWNLHCLLPDVDFFLLLSSITGIVGNRSQANYNAGNNFQDSLARYRVSKGMHGASVNLGAVVGIGFIAENAEYAAKHTFKMANPQTEEEVLATVEYLIDRRHHMALSPDTAQLICGLRTPASYSLSNEAPPTHLKYPMFAQLPPALSNTGPGGSHSAQSATHIRDQLQSATAPEEAARIIHKALRRKMADLLNISEDTIDDSLNVRANGVDSLIEMEFRTWFAKELGATVPLKDLAKDLTQLSARLVSLSSFTKFR.

The segment at 1 to 22 (MPFLNGNTTHHEAHSAEPDHGN) is disordered. Positions 1–416 (MPFLNGNTTH…GTNAHCILDD (416 aa)) constitute a Ketosynthase family 3 (KS3) domain. Over residues 9–22 (THHEAHSAEPDHGN) the composition is skewed to basic and acidic residues. Active-site for beta-ketoacyl synthase activity residues include Cys-166, His-301, and His-340. Residues 460–481 (GFNKFDEPRGSDSAGSNANGSH) are disordered. The segment covering 470 to 481 (SDSAGSNANGSH) has biased composition (low complexity). Residues 601–923 (VFTGQGAQYA…PYLATLSRKD (323 aa)) form a malonyl-CoA:ACP transacylase (MAT) domain region. The tract at residues 993–1128 (HDLFGAPVPD…GEVSPDLKKS (136 aa)) is N-terminal hotdog fold. Positions 993 to 1313 (HDLFGAPVPD…LAGIRLSPFK (321 aa)) are dehydratase (DH) domain. Positions 993-1318 (HDLFGAPVPD…LSPFKPESSE (326 aa)) constitute a PKS/mFAS DH domain. Residue His-1025 is the Proton acceptor; for dehydratase activity of the active site. Positions 1157–1318 (TAPVDFTPVY…LSPFKPESSE (162 aa)) are C-terminal hotdog fold. Asp-1225 acts as the Proton donor; for dehydratase activity in catalysis. Residues 1379 to 1680 (GLRESREMKD…VDFEASSSIY (302 aa)) form a methyltransferase (CMet) domain region. Residues 1910–2227 (GIDSLTWVTD…TGKSIGKVTL (318 aa)) are enoyl reductase (ER) domain. Residues 2251-2425 (SFILAGGLGG…HGASVNLGAV (175 aa)) are ketoreductase (KR) domain. The Carrier domain occupies 2539-2620 (EAARIIHKAL…VSLSSFTKFR (82 aa)). Ser-2576 carries the post-translational modification O-(pantetheine 4'-phosphoryl)serine.

It functions in the pathway secondary metabolite biosynthesis. Its function is as follows. Highly reducing polyketide synthase; part of the gene cluster that mediates the biosynthesis of azaterrilone A and other azaphilones, a class of fungal metabolites characterized by a highly oxygenated pyrano-quinone bicyclic core and exhibiting a broad range of bioactivities. The first step of the pathway begins with the non-reducing polyketide synthase tazA that assembles one acetyl-CoA starter unit, five malonyl-CoA units, and catalyzes a series of Claisen condensations, methylation, PT-mediated cyclization, and finally releases the first hexaketide precursor through the R-domain. The tazA product then undergoes reduction on its terminal ketone and the following pyran-ring formation by yet undetermined enzyme(s). Dehydration and enoyl reduction, possibly involving the trans-enoyl reductase tazE leads to the next intermediate. TazD is predicted as an acetyltransferase and might catalyze the acetylation steps leading to the synthesis of azaterrilone A. Azaterrilone A is not the final product of the taz pathway and both the highly reducing polyketide synthase tazB and the dual enzyme tazHJ catalyze late steps of the pathway, leading to the production of the 2 final stereoisomers that contain additional polyketide modification whose structures have still to be determined. This Aspergillus terreus (strain NIH 2624 / FGSC A1156) protein is Highly reducing polyketide synthase tazB.